A 74-amino-acid chain; its full sequence is Mu-Sparatoxin-Hp2 (74 aa).

The signal sequence occupies residues 1 to 20; sequence MKIIVLMMMLFAAFSAVVLA. A propeptide spanning residues 21–35 is cleaved from the precursor; the sequence is DKSIEDAALDTVMDR. 3 disulfide bridges follow: Cys42/Cys57, Cys49/Cys62, and Cys56/Cys66. Leucine amide is present on Leu73.

As to expression, expressed by the venom gland.

The protein resides in the secreted. Weakly nhibits voltage-gated sodium channels Nav1.7/SCN9A. High concentration of the toxin (3 uM) inhibits Nav1.7/SCN9A currents by 80%. This chain is Mu-Sparatoxin-Hp2, found in Heteropoda pingtungensis (Pingtung huntsman spider).